The primary structure comprises 249 residues: (S)-1-Phenylethanol dehydrogenase (249 aa).

Residues 17-19 (NGI), Asp38, 61-63 (CDV), Asn89, and Tyr93 contribute to the NAD(+) site. Ser141 contributes to the substrate binding site. Tyr154 (proton acceptor) is an active-site residue. NAD(+) is bound by residues Lys158, 184–187 (PSLV), and Thr191.

It belongs to the short-chain dehydrogenases/reductases (SDR) family. Homotetramer.

It carries out the reaction (S)-1-phenylethanol + NAD(+) = acetophenone + NADH + H(+). Catalyzes the NAD-dependent stereospecific oxidation of (S)-1-phenylethanol to acetophenone in the degradation of ethylbenzene. The polypeptide is (S)-1-Phenylethanol dehydrogenase (ped) (Aromatoleum aromaticum (strain DSM 19018 / LMG 30748 / EbN1) (Azoarcus sp. (strain EbN1))).